The primary structure comprises 336 residues: DNA-directed RNA polymerase subunit alpha (336 aa).

Residues 1–232 (MIQKNWQELI…DQLGVFVNFD (232 aa)) are alpha N-terminal domain (alpha-NTD). Residues 248-336 (FNPALLKKVD…DLAKRYEDQY (89 aa)) form an alpha C-terminal domain (alpha-CTD) region.

This sequence belongs to the RNA polymerase alpha chain family. In terms of assembly, homodimer. The RNAP catalytic core consists of 2 alpha, 1 beta, 1 beta' and 1 omega subunit. When a sigma factor is associated with the core the holoenzyme is formed, which can initiate transcription.

It carries out the reaction RNA(n) + a ribonucleoside 5'-triphosphate = RNA(n+1) + diphosphate. In terms of biological role, DNA-dependent RNA polymerase catalyzes the transcription of DNA into RNA using the four ribonucleoside triphosphates as substrates. This Rhizobium rhizogenes (strain K84 / ATCC BAA-868) (Agrobacterium radiobacter) protein is DNA-directed RNA polymerase subunit alpha.